Reading from the N-terminus, the 443-residue chain is Xaa-Pro dipeptidase (443 aa).

5 residues coordinate Mn(2+): aspartate 246, aspartate 257, histidine 339, glutamate 384, and glutamate 423.

It belongs to the peptidase M24B family. Bacterial-type prolidase subfamily. Mn(2+) serves as cofactor.

It catalyses the reaction Xaa-L-Pro dipeptide + H2O = an L-alpha-amino acid + L-proline. In terms of biological role, splits dipeptides with a prolyl residue in the C-terminal position. The polypeptide is Xaa-Pro dipeptidase (Citrobacter koseri (strain ATCC BAA-895 / CDC 4225-83 / SGSC4696)).